The chain runs to 216 residues: Endo-1,4-beta-xylanase 1 (216 aa).

Positions 1 to 19 (MFLTSVVSLVVGAISCVSA) are cleaved as a signal peptide. The 188-residue stretch at 29-216 (QMTPRNSCYG…SSGSASITVS (188 aa)) folds into the GH11 domain. Glutamate 112 serves as the catalytic Nucleophile. Glutamate 203 functions as the Proton donor in the catalytic mechanism.

This sequence belongs to the glycosyl hydrolase 11 (cellulase G) family.

It is found in the secreted. The enzyme catalyses Endohydrolysis of (1-&gt;4)-beta-D-xylosidic linkages in xylans.. Its pathway is glycan degradation; xylan degradation. Functionally, endo-1,4-beta-xylanase involved in the hydrolysis of xylan, a major structural heterogeneous polysaccharide found in plant biomass representing the second most abundant polysaccharide in the biosphere, after cellulose. The sequence is that of Endo-1,4-beta-xylanase 1 (xyl1) from Claviceps purpurea (Ergot fungus).